A 356-amino-acid chain; its full sequence is UDP-N-acetylglucosamine--N-acetylmuramyl-(pentapeptide) pyrophosphoryl-undecaprenol N-acetylglucosamine transferase (356 aa).

Residues 15–17 (TGG), N127, R163, S191, I244, 263–268 (ALTVSE), and Q288 each bind UDP-N-acetyl-alpha-D-glucosamine.

It belongs to the glycosyltransferase 28 family. MurG subfamily.

It localises to the cell inner membrane. The catalysed reaction is di-trans,octa-cis-undecaprenyl diphospho-N-acetyl-alpha-D-muramoyl-L-alanyl-D-glutamyl-meso-2,6-diaminopimeloyl-D-alanyl-D-alanine + UDP-N-acetyl-alpha-D-glucosamine = di-trans,octa-cis-undecaprenyl diphospho-[N-acetyl-alpha-D-glucosaminyl-(1-&gt;4)]-N-acetyl-alpha-D-muramoyl-L-alanyl-D-glutamyl-meso-2,6-diaminopimeloyl-D-alanyl-D-alanine + UDP + H(+). It functions in the pathway cell wall biogenesis; peptidoglycan biosynthesis. Its function is as follows. Cell wall formation. Catalyzes the transfer of a GlcNAc subunit on undecaprenyl-pyrophosphoryl-MurNAc-pentapeptide (lipid intermediate I) to form undecaprenyl-pyrophosphoryl-MurNAc-(pentapeptide)GlcNAc (lipid intermediate II). This is UDP-N-acetylglucosamine--N-acetylmuramyl-(pentapeptide) pyrophosphoryl-undecaprenol N-acetylglucosamine transferase from Klebsiella pneumoniae (strain 342).